The following is a 289-amino-acid chain: 4-hydroxybenzoate octaprenyltransferase (289 aa).

The next 9 helical transmembrane spans lie at 19-39 (IPILLILWPTLTALVLASHGL), 42-62 (ISYLVIFTIGVVVMRTVGCII), 85-105 (GQLSIKNAIWLCISLTLVAFI), 107-127 (VLFLNLYTILLSFVALFLAIL), 134-154 (FFAIPQLILGLAFNFGIFMAF), 165-185 (AWIFYIATICWTIAYDTIYAL), 211-231 (ILLFNFLSLLLLIILGIYCDF), 233-253 (SFFYLGVVICSLFFVRNYFLY), and 265-285 (FSANHWIGLIIFIIAVIQYII).

It belongs to the UbiA prenyltransferase family. Mg(2+) is required as a cofactor.

It localises to the cell inner membrane. The catalysed reaction is all-trans-octaprenyl diphosphate + 4-hydroxybenzoate = 4-hydroxy-3-(all-trans-octaprenyl)benzoate + diphosphate. The protein operates within cofactor biosynthesis; ubiquinone biosynthesis. Its function is as follows. Catalyzes the prenylation of para-hydroxybenzoate (PHB) with an all-trans polyprenyl group. Mediates the second step in the final reaction sequence of ubiquinone-8 (UQ-8) biosynthesis, which is the condensation of the polyisoprenoid side chain with PHB, generating the first membrane-bound Q intermediate 3-octaprenyl-4-hydroxybenzoate. This Francisella tularensis subsp. holarctica (strain FTNF002-00 / FTA) protein is 4-hydroxybenzoate octaprenyltransferase.